A 444-amino-acid polypeptide reads, in one-letter code: tRNA (guanine-N(7)-)-methyltransferase non-catalytic subunit TRM82 (444 aa).

WD repeat units lie at residues 1-47 (MSVI…WSDD), 48-99 (FDKI…LGAP), 100-147 (PIYS…KRFC), 148-192 (FSKR…EPIL), 193-237 (GHVS…DKWL), 238-279 (FGHK…STFD), and 308-354 (FAVS…ITFP). The segment at 55-92 (RNTTAKEQQGQSSENENENKKLKSNKGDSIKRTAAKVP) is disordered. Positions 71-85 (NENKKLKSNKGDSIK) are enriched in basic and acidic residues. Ser93 carries the phosphoserine modification.

The protein belongs to the WD repeat TRM82 family. As to quaternary structure, forms a heterodimer with the catalytic subunit TRM8.

The protein resides in the nucleus. The protein operates within tRNA modification; N(7)-methylguanine-tRNA biosynthesis. Its function is as follows. Required for the formation of N(7)-methylguanine at position 46 (m7G46) in tRNA, a modification required to maintain stability of tRNAs; its absence resulting in tRNA decay. In the complex, it is required to stabilize and induce conformational changes of the catalytic subunit. This chain is tRNA (guanine-N(7)-)-methyltransferase non-catalytic subunit TRM82, found in Saccharomyces cerevisiae (strain ATCC 204508 / S288c) (Baker's yeast).